Reading from the N-terminus, the 549-residue chain is Urocanate hydratase (549 aa).

Residues 46–47 (GG), Gln124, 170–172 (GMG), Glu190, Arg195, 236–237 (NA), 257–261 (QTSAH), 267–268 (YV), and Tyr316 each bind NAD(+). Cys404 is a catalytic residue. Gly486 is a binding site for NAD(+).

This sequence belongs to the urocanase family. Requires NAD(+) as cofactor.

It localises to the cytoplasm. The catalysed reaction is 4-imidazolone-5-propanoate = trans-urocanate + H2O. Its pathway is amino-acid degradation; L-histidine degradation into L-glutamate; N-formimidoyl-L-glutamate from L-histidine: step 2/3. Its function is as follows. Catalyzes the conversion of urocanate to 4-imidazolone-5-propionate. The chain is Urocanate hydratase from Natranaerobius thermophilus (strain ATCC BAA-1301 / DSM 18059 / JW/NM-WN-LF).